A 326-amino-acid polypeptide reads, in one-letter code: Pancreas transcription factor 1 subunit alpha (326 aa).

Residues 162–214 (QLRQAANVRERRRMQSINDAFEGLRSHIPTLPYEKRLSKVDTLRLAIGYINFL) enclose the bHLH domain. Residues 229 to 240 (TGGCGGPGGSRH) are compositionally biased toward gly residues. Disordered stretches follow at residues 229-249 (TGGC…PGNQ) and 304-326 (DPRK…EFVS).

Component of the pancreas transcription factor 1 complex (PTF1) which is composed of TCF3/p75, TCF12/p64 and PTF1A/p48. TCF3 is responsible for the nuclear import of the p48/p64 complex. Interacts with TCF3 and RBPSUH/RBP-Jkappa. As to expression, exocrine pancreas-specific. Expressed in azaserine-induced pancreatic tumors (at protein level). Expressed in AR42J cells but not in ARIP, DSL6A, or DSL6B cells. Down-regulation is associated with the change of an azaserine-induced acinar cell carcinoma to a ductal phenotype.

It localises to the nucleus. It is found in the cytoplasm. Its function is as follows. Transcription factor implicated in the cell fate determination in various organs. Binds to the E-box consensus sequence 5'-CANNTG-3'. Plays a role in early and late pancreas development and differentiation. Important for determining whether cells allocated to the pancreatic buds continue towards pancreatic organogenesis or revert back to duodenal fates. May be involved in the maintenance of exocrine pancreas-specific gene expression including ELA1 and amylase. Required for the formation of pancreatic acinar and ductal cells. Plays an important role in cerebellar development. Directly regulated by FOXN4 and RORC during retinal development, FOXN4-PTF1A pathway plays a central role in directing the differentiation of retinal progenitors towards horizontal and amacrine fates. The protein is Pancreas transcription factor 1 subunit alpha (Ptf1a) of Rattus norvegicus (Rat).